The following is a 702-amino-acid chain: Arginine decarboxylase 1, chloroplastic (702 aa).

Residues methionine 1–tyrosine 52 constitute a chloroplast transit peptide. An N6-(pyridoxal phosphate)lysine modification is found at lysine 136. Pyridoxal 5'-phosphate-binding positions include serine 288, glycine 325, and glutamate 374–arginine 377. Isoleucine 320–tyrosine 330 serves as a coordination point for substrate. Tyrosine 436 to valine 437 provides a ligand contact to substrate. Catalysis depends on cysteine 524, which acts as the Proton donor; shared with dimeric partner. Aspartate 525 provides a ligand contact to substrate. Pyridoxal 5'-phosphate is bound at residue tyrosine 565.

This sequence belongs to the Orn/Lys/Arg decarboxylase class-II family. SpeA subfamily. Homodimer. Only the dimer is catalytically active, as the active sites are constructed of residues from both monomers. May form a head-to-tail homodimer. Homodimer and heterodimer with ADC2. The cofactor is pyridoxal 5'-phosphate. It depends on Mg(2+) as a cofactor.

Its subcellular location is the plastid. The protein localises to the chloroplast. It localises to the cytoplasm. The protein resides in the cytosol. The catalysed reaction is L-arginine + H(+) = agmatine + CO2. It functions in the pathway amine and polyamine biosynthesis; agmatine biosynthesis; agmatine from L-arginine: step 1/1. Functionally, required for the biosynthesis of putrescine. Catalyzes the first step of polyamine (PA) biosynthesis to produce putrescine from arginine. Is a minor contributor to basal arginine decarboxylase (ADC) activity and putrescine biosynthesis. Accumulation of putrescine plays a positive role in freezing tolerance. Production of polyamines is essential for normal seed development. Controls PA homeostasis which is crucial for normal plant growth and development. This is Arginine decarboxylase 1, chloroplastic from Arabidopsis thaliana (Mouse-ear cress).